The primary structure comprises 165 residues: Anaerobic nitrite reductase GLB1 (165 aa).

The region spanning 12 to 162 (VFGEEQEALV…LVAAIKREMK (151 aa)) is the Globin domain. Residues 45-49 (EIAPS) carry the Homodimerization motif. Residues Ser55, Lys69, His73, Arg103, Thr107, and His108 each contribute to the heme b site. Residues 115 to 127 (DGHFEVTGFALLE) carry the Homodimerization motif.

It belongs to the plant globin family. In terms of assembly, homodimer. Heme b is required as a cofactor. In terms of tissue distribution, in vegetative but not in embryonic organs.

It localises to the cytoplasm. Its subcellular location is the nucleus. It catalyses the reaction Fe(III)-heme b-[protein] + nitric oxide + H2O = Fe(II)-heme b-[protein] + nitrite + 2 H(+). Functionally, phytoglobin that reduces nitrite to nitric oxide (NO) under anoxic conditions (e.g. during flooding or in waterlogged soil). May not function as an oxygen storage or transport protein. Has an unusually high affinity for O(2) through an hexacoordinate heme iron because of a very low dissociation constant. The polypeptide is Anaerobic nitrite reductase GLB1 (HB) (Zea mays subsp. parviglumis (Balsas teosinte)).